The chain runs to 1355 residues: Probable major glycoprotein (1355 aa).

The N-terminal stretch at 1-16 is a signal peptide; it reads MKKTMLAIILIPLVYA. N-linked (GlcNAc...) asparagine; by host glycans are attached at residues Asn-81, Asn-112, Asn-129, Asn-169, Asn-173, Asn-192, Asn-542, Asn-655, Asn-682, Asn-744, Asn-780, Asn-811, Asn-815, Asn-860, Asn-865, Asn-882, Asn-895, Asn-1213, Asn-1225, Asn-1267, and Asn-1274. A coiled-coil region spans residues 1245-1299; that stretch reads QIVSMEMEIQDLKLELIQLQKINTSVHMENITGDIDAMKATIEEYRAEMAKLRVT. The chain crosses the membrane as a helical span at residues 1308–1328; it reads FIYAILGVIAIGALIAIIFMA.

It localises to the host membrane. This chain is Probable major glycoprotein (ORF46), found in Ictaluridae (bullhead catfishes).